Reading from the N-terminus, the 393-residue chain is NAD(P)H-quinone oxidoreductase subunit H, chloroplastic (393 aa).

This sequence belongs to the complex I 49 kDa subunit family. NDH is composed of at least 16 different subunits, 5 of which are encoded in the nucleus.

The protein resides in the plastid. The protein localises to the chloroplast thylakoid membrane. It catalyses the reaction a plastoquinone + NADH + (n+1) H(+)(in) = a plastoquinol + NAD(+) + n H(+)(out). The catalysed reaction is a plastoquinone + NADPH + (n+1) H(+)(in) = a plastoquinol + NADP(+) + n H(+)(out). Its function is as follows. NDH shuttles electrons from NAD(P)H:plastoquinone, via FMN and iron-sulfur (Fe-S) centers, to quinones in the photosynthetic chain and possibly in a chloroplast respiratory chain. The immediate electron acceptor for the enzyme in this species is believed to be plastoquinone. Couples the redox reaction to proton translocation, and thus conserves the redox energy in a proton gradient. The protein is NAD(P)H-quinone oxidoreductase subunit H, chloroplastic of Solanum lycopersicum (Tomato).